We begin with the raw amino-acid sequence, 450 residues long: 3-phosphoshikimate 1-carboxyvinyltransferase (450 aa).

Positions 28, 29, and 33 each coordinate 3-phosphoshikimate. K28 serves as a coordination point for phosphoenolpyruvate. The phosphoenolpyruvate site is built by G100 and R128. 3-phosphoshikimate-binding residues include S173, Q175, D326, and K353. Q175 is a binding site for phosphoenolpyruvate. D326 functions as the Proton acceptor in the catalytic mechanism. The phosphoenolpyruvate site is built by R357 and R402.

This sequence belongs to the EPSP synthase family. Monomer.

It localises to the cytoplasm. The catalysed reaction is 3-phosphoshikimate + phosphoenolpyruvate = 5-O-(1-carboxyvinyl)-3-phosphoshikimate + phosphate. Its pathway is metabolic intermediate biosynthesis; chorismate biosynthesis; chorismate from D-erythrose 4-phosphate and phosphoenolpyruvate: step 6/7. Its function is as follows. Catalyzes the transfer of the enolpyruvyl moiety of phosphoenolpyruvate (PEP) to the 5-hydroxyl of shikimate-3-phosphate (S3P) to produce enolpyruvyl shikimate-3-phosphate and inorganic phosphate. The sequence is that of 3-phosphoshikimate 1-carboxyvinyltransferase from Brucella melitensis biotype 1 (strain ATCC 23456 / CCUG 17765 / NCTC 10094 / 16M).